The chain runs to 173 residues: Thiol-disulfide oxidoreductase ResA (173 aa).

A helical; Signal-anchor for type II membrane protein transmembrane segment spans residues 10–29; that stretch reads VIILLILCGAVGFTLYQGYF. A Thioredoxin domain is found at 35-173; it reads MEIGKEAPNF…LEEYLKKITP (139 aa). Residues Cys73 and Cys76 are joined by a disulfide bond.

This sequence belongs to the thioredoxin family. ResA subfamily.

The protein resides in the cell membrane. The protein operates within protein modification; cytochrome c assembly. Thiol-disulfide oxidoreductase which is required in disulfide reduction during c-type cytochrome synthesis. May accept reducing equivalents from CcdA, leading to breakage of disulfide bonds in apocytochrome c; following this reduction heme can be covalently attached. The sequence is that of Thiol-disulfide oxidoreductase ResA from Bacillus thuringiensis subsp. konkukian (strain 97-27).